The chain runs to 1154 residues: MSVRFIIGRSGSGKTTMCLKEMIDQLAQKPDGDPIIYLVPEQMTFQSEYALMNGSLKGMIRAQVFSFTRLAWRILQETGGMSRHHLTQTGVHMLLRKIVEQQKEQLTLFRKAADKRGFIEQLEQMLTEYKRYCVTPATLKQTEEQLRRHATANETVLADKLKDTAMIFEQFEQQMAHHYVDSEDYLRLLAEKIRHSSYMKRARIYMDGFYEFTPQEYMVIEQLFIHCPHVTVALTLDAPYEQLPDDLHVFRNTWRTYAQLRDIALQNGVPIEKVEQLRHNVRHKHEELRHLEAHYDDRPVCKWEKQTEAIIIGEATTRRAEIEGIAREIIRLVRDEGYRYRDIALLIRNVGDYRNVLKTVFADYRIPYFIDEKEPMLDHPFIEWLRASMEAVRTNFRYEAVFRAVKTDFFFHLDQPVHDMRMAMDQLENYVLAFGIQGDKWTEHWTYRKYKGLEGVHAPQTDEEKRYEQQLNEWRKLVISPLLVLQKRLKQAKTGREQCEALYAYAEHLQIPQKLERLRDEAEERGDLSVARHHEQVWQAFIDLLDQYVEILGDETLSLETFLTIIETGFESLQFSLVPPATDQVLIAHFDRSRLSNIRCTFLVGVNEGVIPMRKNDDGMLSETDRELLYHYSLHVAPASRERMLDEPFLLYLALVSSSERLYVTYALSNEQEKTLLPSMFIKRLTDMFPNVTKMQWGTDPFLLPLQQQLAYVTNDVATLGPLVQQLEAWKRQYAIEPMWWDVYNAYVQHEQWKERIAVVVRALFYENRAKRLNKQLAKELYGKKVKASISRMETFNRCPFAHFAAHGLKLKERTVFQLKAPDMGQLFHQALKVIADRLRQEQLPWSQLSKQQCEQLSYEAVEQIAPYIQQEVLLSTHRYRYMKKKLQTIMTKATTVLSEHAKRSGFVPIGVELGFGDGEPLPPLTFTLSDGTVLQFVGRIDRVDQAMSEQGVLLRVIDYKSKQKTLDLTEVYYGLALQMLAYLDIVLEYAEKLVGTSAFPAGVLYFPIHNPMMKVNEWLDEHELEKKFLEQFKMGGYVLADEKTVRLMDEHVEPGTSSLIIPVRLNKNGTFAQHSKVLTEQQFTMLRQHVRRFIVDVGEQMIEGVTHIAPYKQKNKTACQYCEFRDVCQFDEGVDAEQYRVLTPKNIDEWLKG.

In terms of domain architecture, UvrD-like helicase ATP-binding spans 1-284; that stretch reads MSVRFIIGRS…EQLRHNVRHK (284 aa). 8-15 serves as a coordination point for ATP; sequence GRSGSGKT. Residues 279 to 583 form the UvrD-like helicase C-terminal domain; it reads HNVRHKHEEL…QFSLVPPATD (305 aa). Cys-799, Cys-1120, Cys-1123, and Cys-1129 together coordinate [4Fe-4S] cluster.

This sequence belongs to the helicase family. AddB/RexB type 1 subfamily. As to quaternary structure, heterodimer of AddA and AddB. It depends on Mg(2+) as a cofactor. [4Fe-4S] cluster is required as a cofactor.

Its function is as follows. The heterodimer acts as both an ATP-dependent DNA helicase and an ATP-dependent, dual-direction single-stranded exonuclease. Recognizes the chi site generating a DNA molecule suitable for the initiation of homologous recombination. The AddB subunit has 5' -&gt; 3' nuclease activity but not helicase activity. The chain is ATP-dependent helicase/deoxyribonuclease subunit B from Anoxybacillus flavithermus (strain DSM 21510 / WK1).